The chain runs to 288 residues: Diaminopimelate epimerase (288 aa).

Residues Asn13, Gln46, and Asn66 each coordinate substrate. Cys75 serves as the catalytic Proton donor. Substrate-binding positions include 76 to 77 (GN), Asn166, Asn199, and 217 to 218 (ER). Cys226 functions as the Proton acceptor in the catalytic mechanism. Substrate is bound at residue 227–228 (GT).

The protein belongs to the diaminopimelate epimerase family. In terms of assembly, homodimer.

It localises to the cytoplasm. The enzyme catalyses (2S,6S)-2,6-diaminopimelate = meso-2,6-diaminopimelate. It participates in amino-acid biosynthesis; L-lysine biosynthesis via DAP pathway; DL-2,6-diaminopimelate from LL-2,6-diaminopimelate: step 1/1. Its function is as follows. Catalyzes the stereoinversion of LL-2,6-diaminopimelate (L,L-DAP) to meso-diaminopimelate (meso-DAP), a precursor of L-lysine and an essential component of the bacterial peptidoglycan. This Cupriavidus metallidurans (strain ATCC 43123 / DSM 2839 / NBRC 102507 / CH34) (Ralstonia metallidurans) protein is Diaminopimelate epimerase.